Consider the following 702-residue polypeptide: Elongation factor G (702 aa).

In terms of domain architecture, tr-type G spans 8-286 (DKVRNIGIIA…AVVEYLPSPL (279 aa)). Residues 17-24 (AHIDAGKT), 85-89 (DTPGH), and 139-142 (NKMD) each bind GTP.

The protein belongs to the TRAFAC class translation factor GTPase superfamily. Classic translation factor GTPase family. EF-G/EF-2 subfamily.

Its subcellular location is the cytoplasm. Catalyzes the GTP-dependent ribosomal translocation step during translation elongation. During this step, the ribosome changes from the pre-translocational (PRE) to the post-translocational (POST) state as the newly formed A-site-bound peptidyl-tRNA and P-site-bound deacylated tRNA move to the P and E sites, respectively. Catalyzes the coordinated movement of the two tRNA molecules, the mRNA and conformational changes in the ribosome. This is Elongation factor G from Chloroflexus aurantiacus (strain ATCC 29366 / DSM 635 / J-10-fl).